The following is a 151-amino-acid chain: Ribonuclease H (151 aa).

In terms of domain architecture, RNase H type-1 spans methionine 1 to glutamine 143. Residues aspartate 10, glutamate 49, aspartate 71, and aspartate 135 each coordinate Mg(2+).

This sequence belongs to the RNase H family. As to quaternary structure, monomer. It depends on Mg(2+) as a cofactor.

It is found in the cytoplasm. It carries out the reaction Endonucleolytic cleavage to 5'-phosphomonoester.. Its function is as follows. Endonuclease that specifically degrades the RNA of RNA-DNA hybrids. In Mycolicibacterium gilvum (strain PYR-GCK) (Mycobacterium gilvum (strain PYR-GCK)), this protein is Ribonuclease H.